Here is a 206-residue protein sequence, read N- to C-terminus: MEFNVKTLEGKDAGKVSLSDAIFGLEPREDILARVIRWQLAKKQQGTHKAKGRAEVSRTGAKMYKQKGTGRARHHSARAPQFRGGGKAHGPVVRSHEHDLPKKVRALGLRLALSAKIKADDVIVIDNLVAAEAKTKALASVFETLGLTNALFIGGAELDGNFKLAAQNIPNIDVLPIQGINVYDIVRRGKLVLSKAAVEALEERFK.

The segment at 63 to 97 is disordered; that stretch reads MYKQKGTGRARHHSARAPQFRGGGKAHGPVVRSHE. The segment covering 64–77 has biased composition (basic residues); that stretch reads YKQKGTGRARHHSA.

Belongs to the universal ribosomal protein uL4 family. Part of the 50S ribosomal subunit.

Functionally, one of the primary rRNA binding proteins, this protein initially binds near the 5'-end of the 23S rRNA. It is important during the early stages of 50S assembly. It makes multiple contacts with different domains of the 23S rRNA in the assembled 50S subunit and ribosome. Its function is as follows. Forms part of the polypeptide exit tunnel. This chain is Large ribosomal subunit protein uL4, found in Rhizobium leguminosarum bv. trifolii (strain WSM2304).